The chain runs to 297 residues: Haloalkane dehalogenase (297 aa).

The 102-residue stretch at 47-148 (PPIVLLHGEP…AIARLVVANG (102 aa)) folds into the AB hydrolase-1 domain. D123 functions as the Nucleophile in the catalytic mechanism. The active-site Proton donor is D250. H279 (proton acceptor) is an active-site residue.

This sequence belongs to the haloalkane dehalogenase family. Type 1 subfamily. Monomer.

The catalysed reaction is 1-haloalkane + H2O = a halide anion + a primary alcohol + H(+). Catalyzes hydrolytic cleavage of carbon-halogen bonds in halogenated aliphatic compounds, leading to the formation of the corresponding primary alcohols, halide ions and protons. The polypeptide is Haloalkane dehalogenase (Mycobacterium marinum (strain ATCC BAA-535 / M)).